Reading from the N-terminus, the 380-residue chain is Protein Wnt-5a (380 aa).

Positions 1-35 (MKKSIGILSPGVALGMAGSAMSSKFFLVALAIFFS) are cleaved as a signal peptide. Residues 36 to 61 (FAQVVIEANSWWSLGMNNPVQMSEVY) constitute a propeptide that is removed on maturation. Cys-104 and Cys-115 are oxidised to a cystine. 2 N-linked (GlcNAc...) asparagine glycosylation sites follow: Asn-114 and Asn-120. 10 disulfide bridges follow: Cys-154–Cys-162, Cys-164–Cys-182, Cys-238–Cys-252, Cys-240–Cys-247, Cys-309–Cys-340, Cys-325–Cys-335, Cys-339–Cys-379, Cys-355–Cys-370, Cys-357–Cys-367, and Cys-362–Cys-363. Residue Ser-244 is the site of O-palmitoleoyl serine; by PORCN attachment. Residues Asn-312 and Asn-326 are each glycosylated (N-linked (GlcNAc...) asparagine).

Belongs to the Wnt family. Forms a soluble 1:1 complex with AFM; this prevents oligomerization and is required for prolonged biological activity. The complex with AFM may represent the physiological form in body fluids. Homooligomer; disulfide-linked, leading to inactivation (in vitro). Interacts with PORCN. Interacts with WLS. Interacts with glypican GCP3. Interacts with PKD1 (via extracellular domain). Interacts with TMEM67. Glycosylation is necessary for secretion but not for activity. In terms of processing, palmitoleoylation is required for efficient binding to frizzled receptors. Depalmitoleoylation leads to Wnt signaling pathway inhibition. Post-translationally, proteolytic processing by TIKI1 and TIKI2 promotes oxidation and formation of large disulfide-bond oligomers, leading to inactivation of WNT5A. Expression is increased in differentiated thyroid carcinomas compared to normal thyroid tissue and anaplastic thyroid tumors where expression is low or undetectable. Expression is found in thyrocytes but not in stromal cells (at protein level). Detected in neonate heart and lung.

Its subcellular location is the secreted. It localises to the extracellular space. The protein resides in the extracellular matrix. Its function is as follows. Ligand for members of the frizzled family of seven transmembrane receptors. Can activate or inhibit canonical Wnt signaling, depending on receptor context. In the presence of FZD4, activates beta-catenin signaling. In the presence of ROR2, inhibits the canonical Wnt pathway by promoting beta-catenin degradation through a GSK3-independent pathway which involves down-regulation of beta-catenin-induced reporter gene expression. Suppression of the canonical pathway allows chondrogenesis to occur and inhibits tumor formation. Stimulates cell migration. Decreases proliferation, migration, invasiveness and clonogenicity of carcinoma cells and may act as a tumor suppressor. Mediates motility of melanoma cells. Required during embryogenesis for extension of the primary anterior-posterior axis and for outgrowth of limbs and the genital tubercle. Inhibits type II collagen expression in chondrocytes. The sequence is that of Protein Wnt-5a (WNT5A) from Homo sapiens (Human).